The chain runs to 572 residues: Pentatricopeptide repeat-containing protein At5g15010, mitochondrial (572 aa).

The transit peptide at 1 to 57 directs the protein to the mitochondrion; it reads MRGIFLIRSRLSIFRAPAVKCLRFSNVLPSLSNNCIVRLYMEPPVACVLPLGLCSMF. PPR repeat units follow at residues 160–194, 196–230, 231–261, 265–300, 301–335, 336–371, 372–406, 412–438, 439–473, and 474–508; these read SVREYHSMISILGKMRKFDTAWTLIDEMRKFSPSL, NSQTLLIMIRKYCAVHDVGKAINTFHAYKRFKLEM, GIDDFQSLLSALCRYKNVSDAGHLIFCNKDK, DAKSFNIVLNGWCNVIGSPREAERVWMEMGNVGVKH, DVVSYSSMISCYSKGGSLNKVLKLFDRMKKECIEP, DRKVYNAVVHALAKASFVSEARNLMKTMEEEKGIEP, NVVTYNSLIKPLCKARKTEEAKQVFDEMLEKGLFP, HAFMRILRTGEEVFELLAKMRKMGCEP, TVETYIMLIRKLCRWRDFDNVLLLWDEMKEKTVGP, and DLSSYIVMIHGLFLNGKIEEAYGYYKEMKDKGMRP.

Belongs to the PPR family. P subfamily.

It is found in the mitochondrion. The sequence is that of Pentatricopeptide repeat-containing protein At5g15010, mitochondrial from Arabidopsis thaliana (Mouse-ear cress).